The chain runs to 160 residues: Transcription elongation factor GreA (160 aa).

Residues 49–75 (SEYDEAKNDQAFTEGRIIQLENMLKNA) adopt a coiled-coil conformation.

Belongs to the GreA/GreB family.

Functionally, necessary for efficient RNA polymerase transcription elongation past template-encoded arresting sites. The arresting sites in DNA have the property of trapping a certain fraction of elongating RNA polymerases that pass through, resulting in locked ternary complexes. Cleavage of the nascent transcript by cleavage factors such as GreA or GreB allows the resumption of elongation from the new 3'terminus. GreA releases sequences of 2 to 3 nucleotides. The chain is Transcription elongation factor GreA from Clostridium beijerinckii (strain ATCC 51743 / NCIMB 8052) (Clostridium acetobutylicum).